The primary structure comprises 177 residues: Large ribosomal subunit protein uL6 (177 aa).

The protein belongs to the universal ribosomal protein uL6 family. Part of the 50S ribosomal subunit.

In terms of biological role, this protein binds to the 23S rRNA, and is important in its secondary structure. It is located near the subunit interface in the base of the L7/L12 stalk, and near the tRNA binding site of the peptidyltransferase center. This chain is Large ribosomal subunit protein uL6, found in Rickettsia bellii (strain OSU 85-389).